The primary structure comprises 65 residues: Defensin Cg-Defm (65 aa).

The N-terminal stretch at 1 to 22 is a signal peptide; sequence MKVFVLLTLAVLLMVSADMAFA. Beta-D-GlcNAc-(1-&gt;4)-Mur2Ac(oyl-L-Ala-gamma-D-Glu-L-Lys-D-Ala-D-Ala)-di-trans,octa-cis-undecaprenyl diphosphate is bound by residues F24, G25, and C26. Cystine bridges form between C26–C47, C33–C56, C37–C58, and C42–C61. Positions 27–30 are binds to membrane interface; it reads PGNQ. H36 contacts beta-D-GlcNAc-(1-&gt;4)-Mur2Ac(oyl-L-Ala-gamma-D-Glu-L-Lys-D-Ala-D-Ala)-di-trans,octa-cis-undecaprenyl diphosphate. A binds to membrane interface region spans residues 48–54; that stretch reads DAATLWL. C56 serves as a coordination point for beta-D-GlcNAc-(1-&gt;4)-Mur2Ac(oyl-L-Ala-gamma-D-Glu-L-Lys-D-Ala-D-Ala)-di-trans,octa-cis-undecaprenyl diphosphate.

Belongs to the invertebrate defensin family. Expressed in the mantle. Low or no expression in most of the organs analyzed, including hemocytes, heart, digestive gland, and gills.

It is found in the secreted. The protein localises to the target cell membrane. In terms of biological role, antibacterial peptide mostly active against Gram-positive bacteria (M.lysodeikticus, S.aureus, and the marine bacteria, B.stationis, and M.maritypicum). It acts by selectively inhibiting peptidoglycan biosynthesis through complex formation with the cell wall precursor lipid II (1:1 molar ratio) thus inhibiting cell wall synthesis. It does not disrupt cell membranes. Is noticeably more potent than Cg-Defh1. It shows no or limited activities against Gram-negative bacteria and filamentous fungi. This is Defensin Cg-Defm from Magallana gigas (Pacific oyster).